Reading from the N-terminus, the 460-residue chain is MSARCCAGQLACCCGSAGCALCCGCCPKFRQSRSTRFMYLFYFTLVIIPCCVMMSPSVMKQMTEHIPFFEDFCKGIKAGDTCENLVGYSAVYRVCFGMACFFFVFCVLTFKVNNSKSCRASIHNGFWFFKLLLLGAMCSGAFFIPDQETFLNVWRYVGAVGSFFFICIQLLLIVEFAHKWNKNWTAGTVRNKLWYASLSLALIMYSIAVGGLALMAVFYTQWDDCMDNKILLGVHGGLCVLISLAAISPCVQNRQPHSGLLQPGLISCYVTYLTFSALTSKPEKVVKDEHGKNVTICVPDFGQDFRRDESMVTWLGTLLLVVCISYSCLTSTTRSSSDALQRRYGAPELEVARCCFCFGPDGEDTEEQQNVKEGPRVIYDEKKGTVYSYSYFHFVLLLASLYVMMTLTSWFHYENATIETFFVGSWSIFWVKMASCWMCVLLYLWTLVAPLCCPSRQFSV.

Over 1-36 (MSARCCAGQLACCCGSAGCALCCGCCPKFRQSRSTR) the chain is Extracellular. A helical transmembrane segment spans residues 37 to 57 (FMYLFYFTLVIIPCCVMMSPS). Over 58–89 (VMKQMTEHIPFFEDFCKGIKAGDTCENLVGYS) the chain is Cytoplasmic. Residues 90 to 110 (AVYRVCFGMACFFFVFCVLTF) form a helical membrane-spanning segment. Residues 111–124 (KVNNSKSCRASIHN) are Extracellular-facing. N-linked (GlcNAc...) asparagine glycosylation occurs at N113. The chain crosses the membrane as a helical span at residues 125-145 (GFWFFKLLLLGAMCSGAFFIP). Topologically, residues 146 to 156 (DQETFLNVWRY) are cytoplasmic. A helical transmembrane segment spans residues 157-177 (VGAVGSFFFICIQLLLIVEFA). Residues 178–197 (HKWNKNWTAGTVRNKLWYAS) lie on the Extracellular side of the membrane. N-linked (GlcNAc...) asparagine glycosylation occurs at N183. The helical transmembrane segment at 198–218 (LSLALIMYSIAVGGLALMAVF) threads the bilayer. Residues 219-229 (YTQWDDCMDNK) are Cytoplasmic-facing. The helical transmembrane segment at 230-250 (ILLGVHGGLCVLISLAAISPC) threads the bilayer. Residues 251 to 258 (VQNRQPHS) are Extracellular-facing. The chain crosses the membrane as a helical span at residues 259–279 (GLLQPGLISCYVTYLTFSALT). Topologically, residues 280-309 (SKPEKVVKDEHGKNVTICVPDFGQDFRRDE) are cytoplasmic. Residues 310–330 (SMVTWLGTLLLVVCISYSCLT) traverse the membrane as a helical segment. The Extracellular portion of the chain corresponds to 331-390 (STTRSSSDALQRRYGAPELEVARCCFCFGPDGEDTEEQQNVKEGPRVIYDEKKGTVYSYS). A helical membrane pass occupies residues 391 to 411 (YFHFVLLLASLYVMMTLTSWF). Over 412–427 (HYENATIETFFVGSWS) the chain is Cytoplasmic. The helical transmembrane segment at 428–448 (IFWVKMASCWMCVLLYLWTLV) threads the bilayer. The Extracellular segment spans residues 449–460 (APLCCPSRQFSV).

It belongs to the TDE1 family. As to expression, brain. Expressed at high levels in the white matter and the oligodendroglial cells of the brain. Expressed at low levels in the liver.

It is found in the cell membrane. It carries out the reaction a 1,2-diacyl-sn-glycero-3-phospho-L-serine(in) = a 1,2-diacyl-sn-glycero-3-phospho-L-serine(out). The catalysed reaction is a 1,2-diacyl-sn-glycero-3-phosphocholine(in) = a 1,2-diacyl-sn-glycero-3-phosphocholine(out). It catalyses the reaction a 1,2-diacyl-sn-glycero-3-phosphoethanolamine(in) = a 1,2-diacyl-sn-glycero-3-phosphoethanolamine(out). Functionally, restriction factor required to restrict infectivity of gammaretroviruses: acts by inhibiting an early step of viral infection. Impairs the penetration of the viral particle into the cytoplasm. Non-ATP-dependent, non-specific lipid transporter for phosphatidylserine, phosphatidylcholine, and phosphatidylethanolamine. Functions as a scramblase that flips lipids in both directions across the membrane. Phospholipid scrambling results in gammaretroviral surface exposure of phosphatidylserine and loss of membrane asymmetry, which leads to loss of infectivity. Enhances the incorporation of serine into phosphatidylserine and sphingolipids. May play a role in providing serine molecules for the formation of myelin glycosphingolipids in oligodendrocytes. The protein is Serine incorporator 5 (Serinc5) of Rattus norvegicus (Rat).